A 311-amino-acid chain; its full sequence is Ribose-phosphate pyrophosphokinase (311 aa).

Residues 34-36 (DQE) and 93-94 (RQ) each bind ATP. His-127 and Asp-168 together coordinate Mg(2+). Lys-191 is an active-site residue. D-ribose 5-phosphate is bound by residues Arg-193, Asp-217, and 221-225 (DSGGT).

This sequence belongs to the ribose-phosphate pyrophosphokinase family. Class I subfamily. Homohexamer. Requires Mg(2+) as cofactor.

The protein resides in the cytoplasm. The catalysed reaction is D-ribose 5-phosphate + ATP = 5-phospho-alpha-D-ribose 1-diphosphate + AMP + H(+). Its pathway is metabolic intermediate biosynthesis; 5-phospho-alpha-D-ribose 1-diphosphate biosynthesis; 5-phospho-alpha-D-ribose 1-diphosphate from D-ribose 5-phosphate (route I): step 1/1. Its function is as follows. Involved in the biosynthesis of the central metabolite phospho-alpha-D-ribosyl-1-pyrophosphate (PRPP) via the transfer of pyrophosphoryl group from ATP to 1-hydroxyl of ribose-5-phosphate (Rib-5-P). The chain is Ribose-phosphate pyrophosphokinase from Mesorhizobium japonicum (strain LMG 29417 / CECT 9101 / MAFF 303099) (Mesorhizobium loti (strain MAFF 303099)).